The sequence spans 263 residues: UDP-N-acetylenolpyruvoylglucosamine reductase (263 aa).

Residue Arg-146 is part of the active site. Ser-188 acts as the Proton donor in catalysis. Glu-258 is an active-site residue.

This sequence belongs to the MurB family. It depends on FAD as a cofactor.

The protein resides in the cytoplasm. The enzyme catalyses UDP-N-acetyl-alpha-D-muramate + NADP(+) = UDP-N-acetyl-3-O-(1-carboxyvinyl)-alpha-D-glucosamine + NADPH + H(+). It participates in cell wall biogenesis; peptidoglycan biosynthesis. Functionally, cell wall formation. This Helicobacter hepaticus (strain ATCC 51449 / 3B1) protein is UDP-N-acetylenolpyruvoylglucosamine reductase.